A 336-amino-acid chain; its full sequence is Dihydroorotate dehydrogenase (quinone) (336 aa).

Residues 62-66 (AGLDK) and threonine 86 contribute to the FMN site. A substrate-binding site is contributed by lysine 66. Substrate is bound at residue 111–115 (NRMGF). Asparagine 139 and asparagine 172 together coordinate FMN. Asparagine 172 contributes to the substrate binding site. Catalysis depends on serine 175, which acts as the Nucleophile. Asparagine 177 contacts substrate. Residues lysine 217 and threonine 245 each coordinate FMN. 246–247 (NT) contacts substrate. FMN contacts are provided by residues glycine 268, glycine 297, and 318-319 (YS).

This sequence belongs to the dihydroorotate dehydrogenase family. Type 2 subfamily. Monomer. The cofactor is FMN.

The protein resides in the cell membrane. It catalyses the reaction (S)-dihydroorotate + a quinone = orotate + a quinol. It functions in the pathway pyrimidine metabolism; UMP biosynthesis via de novo pathway; orotate from (S)-dihydroorotate (quinone route): step 1/1. In terms of biological role, catalyzes the conversion of dihydroorotate to orotate with quinone as electron acceptor. This chain is Dihydroorotate dehydrogenase (quinone), found in Shigella flexneri serotype 5b (strain 8401).